A 225-amino-acid chain; its full sequence is Protein ZW2 (225 aa).

The DOG1 domain maps to 7 to 225; the sequence is SETFASFFND…FYLRLRDLGV (219 aa).

Its function is as follows. May be involved in the regulation of abscisic acid (ABA) sensitivity. This Arabidopsis thaliana (Mouse-ear cress) protein is Protein ZW2.